The chain runs to 168 residues: Protein OPG162 (168 aa).

Residues 1–14 (MKSLNRQTVSRFKK) are Intravirion-facing. Residues 15–37 (LSVPAAIMMILSTIISGIGTFLH) traverse the membrane as a helical segment. Topologically, residues 38-168 (YKEELMPSAC…SVLCVKRFYK (131 aa)) are virion surface. The C-type lectin domain maps to 54–163 (YDKHCYLDTN…CKSTQSVLCV (110 aa)). Disulfide bonds link Cys75/Cys162 and Cys141/Cys154. A glycan (N-linked (GlcNAc...) asparagine; by host) is linked at Asn133.

This sequence belongs to the orthopoxvirus OPG162 protein family. Interacts with protein OPG161. Interacts with protein OPG164. Interacts with protein OPG190.

It is found in the virion membrane. It localises to the host Golgi apparatus. In terms of biological role, forms a complex with OPG162 and OPG190 to coordinate the incorporation of OPG164 into wrapped enveloped virion (EV) membranes and, subsequently, the production of actin tails. Therefore plays an essential role in efficient cell-to-cell spread of viral particles. The sequence is that of Protein OPG162 (OPG162) from Variola virus (isolate Human/India/Ind3/1967) (VARV).